Consider the following 76-residue polypeptide: Large ribosomal subunit protein uL24 (76 aa).

Belongs to the universal ribosomal protein uL24 family. As to quaternary structure, part of the 50S ribosomal subunit.

One of two assembly initiator proteins, it binds directly to the 5'-end of the 23S rRNA, where it nucleates assembly of the 50S subunit. In terms of biological role, one of the proteins that surrounds the polypeptide exit tunnel on the outside of the subunit. This chain is Large ribosomal subunit protein uL24, found in Wolinella succinogenes (strain ATCC 29543 / DSM 1740 / CCUG 13145 / JCM 31913 / LMG 7466 / NCTC 11488 / FDC 602W) (Vibrio succinogenes).